Here is a 203-residue protein sequence, read N- to C-terminus: Thymidylate kinase (203 aa).

10–17 is an ATP binding site; it reads GMDGAGKS.

It belongs to the thymidylate kinase family.

It catalyses the reaction dTMP + ATP = dTDP + ADP. Its function is as follows. Phosphorylation of dTMP to form dTDP in both de novo and salvage pathways of dTTP synthesis. This Methylobacillus flagellatus (strain ATCC 51484 / DSM 6875 / VKM B-1610 / KT) protein is Thymidylate kinase.